Here is a 711-residue protein sequence, read N- to C-terminus: MDIEDEENMSSSSTDIKENRNLDNMPPKDSSTPGPGEGIPLSNGGGGSTSRKRPLEEGSNGHSKYRLKKRRKTPGPVLPKNALMQLNEIKPGLQYMLLSQTGPVHAPLFVMSVEVNGQVFEGSGPTKKKAKLHAAEKALRSFVQFPNASEAHLAMGRTLSVNTDFTSDQADFPDTLFNGFETPDKSEPPFYVGSNGDDSFSSSGDVSLSASPVPASLTQPPLPIPPPFPPPSGKNPVMILNELRPGLKYDFLSESGESHAKSFVMSVVVDGQFFEGSGRNKKLAKARAAQSALATVFNLHLDQTPSRQPVLSEGLQLHLPQVLADAVSRLVLGKFSDLTDNFSSPHARRKVLSGVVMTTGTDVKDAKVISVSTGTKCINGEYMSDRGLALNDCHAEIISRRSLLRFLYAQLELYLNNKEDQKKSIFQKSERGGFRLKDTVQFHLYISTSPCGDARIFSPHEPVLEGMTPDSHQLTEPADRHPNRKARGQLRTKIESGEGTIPVRSNASIQTWDGVLQGERLLTMSCSDKIARWNVVGIQGSLLSIFVEPIYFSSIILGSLYHGDHLSRAMYQRISNIEDLPPLYTLNKPLLSGISNAEARQPGKAPNFSVNWTVGDATIEVINATTGKDELGRPSRLCKHALYCRWMRVHGKVPPHLLRTKITKPTTYHESKLAAREYQAAKARLFTAFIKAGLGAWVEKPTEQDQFSFTP.

The interval 1–78 (MDIEDEENMS…KRRKTPGPVL (78 aa)) is disordered. The segment covering 63–73 (SKYRLKKRRKT) has biased composition (basic residues). Positions 78–144 (LPKNALMQLN…AEKALRSFVQ (67 aa)) constitute a DRBM 1 domain. Interaction with substrate RNA regions lie at residues 83 to 88 (LMQLNE) and 104 to 105 (VH). S149 carries the phosphoserine modification. Residues 176-220 (LFNGFETPDKSEPPFYVGSNGDDSFSSSGDVSLSASPVPASLTQP) are disordered. Low complexity predominate over residues 192-213 (VGSNGDDSFSSSGDVSLSASPV). The DRBM 2 domain occupies 231–298 (PSGKNPVMIL…AQSALATVFN (68 aa)). 2 interaction with substrate RNA regions span residues 237–242 (VMILNE) and H259. Residues 370–707 (SVSTGTKCIN…VEKPTEQDQF (338 aa)) enclose the A to I editase domain. H394 contacts Zn(2+). E396 acts as the Proton donor in catalysis. Residues R400 and R401 each contribute to the 1D-myo-inositol hexakisphosphate site. 2 residues coordinate Zn(2+): C451 and C526. K529, R532, K639, K672, K682, and K700 together coordinate 1D-myo-inositol hexakisphosphate.

Homodimer. Homodimerization is essential for its catalytic activity. Can form heterodimers with isoform 5 of ADAR/ADAR1. Requires 1D-myo-inositol hexakisphosphate as cofactor.

It localises to the nucleus. It is found in the nucleolus. It carries out the reaction adenosine in double-stranded RNA + H2O + H(+) = inosine in double-stranded RNA + NH4(+). Functionally, catalyzes the hydrolytic deamination of adenosine to inosine in double-stranded RNA (dsRNA) referred to as A-to-I RNA editing. This may affect gene expression and function in a number of ways that include mRNA translation by changing codons and hence the amino acid sequence of proteins; pre-mRNA splicing by altering splice site recognition sequences; RNA stability by changing sequences involved in nuclease recognition; genetic stability in the case of RNA virus genomes by changing sequences during viral RNA replication; and RNA structure-dependent activities such as microRNA production or targeting or protein-RNA interactions. Can edit both viral and cellular RNAs and can edit RNAs at multiple sites (hyper-editing) or at specific sites (site-specific editing). Its cellular RNA substrates include: bladder cancer-associated protein (BLCAP), neurotransmitter receptors for glutamate (GRIA2 and GRIK2) and serotonin (HTR2C), GABA receptor (GABRA3) and potassium voltage-gated channel (KCNA1). Site-specific RNA editing of transcripts encoding these proteins results in amino acid substitutions which consequently alter their functional activities. Edits GRIA2 at both the Q/R and R/G sites efficiently but converts the adenosine in hotspot1 much less efficiently. Can inhibit cell proliferation and migration and can stimulate exocytosis. This chain is Double-stranded RNA-specific editase 1 (Adarb1), found in Mus musculus (Mouse).